A 21-amino-acid chain; its full sequence is Complement receptor 3-related protein (21 aa).

The protein resides in the secreted. Plays a role in adherence of C.albicans to buccal epithelial cells, and in biofilm formation. The chain is Complement receptor 3-related protein from Candida albicans (Yeast).